Reading from the N-terminus, the 518-residue chain is Glutamate--cysteine ligase (518 aa).

It belongs to the glutamate--cysteine ligase type 1 family. Type 1 subfamily.

It carries out the reaction L-cysteine + L-glutamate + ATP = gamma-L-glutamyl-L-cysteine + ADP + phosphate + H(+). Its pathway is sulfur metabolism; glutathione biosynthesis; glutathione from L-cysteine and L-glutamate: step 1/2. In Escherichia fergusonii (strain ATCC 35469 / DSM 13698 / CCUG 18766 / IAM 14443 / JCM 21226 / LMG 7866 / NBRC 102419 / NCTC 12128 / CDC 0568-73), this protein is Glutamate--cysteine ligase.